We begin with the raw amino-acid sequence, 447 residues long: Omega-3 fatty acid desaturase, chloroplastic (447 aa).

The short motif at 167 to 171 is the Histidine box-1 element; it reads HDCGH. Positions 203-207 match the Histidine box-2 motif; it reads HRTHH. Residues 370 to 374 carry the Histidine box-3 motif; it reads HVIHH.

Belongs to the fatty acid desaturase type 1 family.

Its subcellular location is the plastid. The protein localises to the chloroplast membrane. It participates in lipid metabolism; polyunsaturated fatty acid biosynthesis. In terms of biological role, chloroplast omega-3 fatty acid desaturase introduces the third double bond in the biosynthesis of 16:3 and 18:3 fatty acids, important constituents of plant membranes. It is thought to use ferredoxin as an electron donor and to act on fatty acids esterified to galactolipids, sulfolipids and phosphatidylglycerol. The sequence is that of Omega-3 fatty acid desaturase, chloroplastic (FAD7) from Sesamum indicum (Oriental sesame).